A 409-amino-acid polypeptide reads, in one-letter code: Phosphopentomutase (409 aa).

Positions 10, 302, 307, 343, 344, and 355 each coordinate Mn(2+).

It belongs to the phosphopentomutase family. Mn(2+) serves as cofactor.

It is found in the cytoplasm. It carries out the reaction 2-deoxy-alpha-D-ribose 1-phosphate = 2-deoxy-D-ribose 5-phosphate. The enzyme catalyses alpha-D-ribose 1-phosphate = D-ribose 5-phosphate. The protein operates within carbohydrate degradation; 2-deoxy-D-ribose 1-phosphate degradation; D-glyceraldehyde 3-phosphate and acetaldehyde from 2-deoxy-alpha-D-ribose 1-phosphate: step 1/2. In terms of biological role, isomerase that catalyzes the conversion of deoxy-ribose 1-phosphate (dRib-1-P) and ribose 1-phosphate (Rib-1-P) to deoxy-ribose 5-phosphate (dRib-5-P) and ribose 5-phosphate (Rib-5-P), respectively. This is Phosphopentomutase from Chelativorans sp. (strain BNC1).